The chain runs to 184 residues: Ribosome maturation factor RimM (184 aa).

The PRC barrel domain maps to 112-184; it reads TDSYYWIDLI…SNKTISLDWQ (73 aa).

The protein belongs to the RimM family. Binds ribosomal protein uS19.

The protein resides in the cytoplasm. Its function is as follows. An accessory protein needed during the final step in the assembly of 30S ribosomal subunit, possibly for assembly of the head region. Essential for efficient processing of 16S rRNA. May be needed both before and after RbfA during the maturation of 16S rRNA. It has affinity for free ribosomal 30S subunits but not for 70S ribosomes. This chain is Ribosome maturation factor RimM, found in Polynucleobacter necessarius subsp. necessarius (strain STIR1).